The chain runs to 219 residues: 2-C-methyl-D-erythritol 4-phosphate cytidylyltransferase (219 aa).

This sequence belongs to the IspD/TarI cytidylyltransferase family. IspD subfamily.

It carries out the reaction 2-C-methyl-D-erythritol 4-phosphate + CTP + H(+) = 4-CDP-2-C-methyl-D-erythritol + diphosphate. The protein operates within isoprenoid biosynthesis; isopentenyl diphosphate biosynthesis via DXP pathway; isopentenyl diphosphate from 1-deoxy-D-xylulose 5-phosphate: step 2/6. Functionally, catalyzes the formation of 4-diphosphocytidyl-2-C-methyl-D-erythritol from CTP and 2-C-methyl-D-erythritol 4-phosphate (MEP). The protein is 2-C-methyl-D-erythritol 4-phosphate cytidylyltransferase of Bacteroides thetaiotaomicron (strain ATCC 29148 / DSM 2079 / JCM 5827 / CCUG 10774 / NCTC 10582 / VPI-5482 / E50).